We begin with the raw amino-acid sequence, 354 residues long: Uroporphyrinogen decarboxylase (354 aa).

Substrate-binding positions include 27 to 31, Asp77, Tyr154, Ser209, and His327; that span reads RQAGR.

The protein belongs to the uroporphyrinogen decarboxylase family. Homodimer.

It localises to the cytoplasm. The catalysed reaction is uroporphyrinogen III + 4 H(+) = coproporphyrinogen III + 4 CO2. The protein operates within porphyrin-containing compound metabolism; protoporphyrin-IX biosynthesis; coproporphyrinogen-III from 5-aminolevulinate: step 4/4. In terms of biological role, catalyzes the decarboxylation of four acetate groups of uroporphyrinogen-III to yield coproporphyrinogen-III. The protein is Uroporphyrinogen decarboxylase of Shewanella putrefaciens (strain CN-32 / ATCC BAA-453).